The sequence spans 121 residues: MAELNVEIVAVDRNIWSGTAKFLFTRTTVGEIGILPRHIPLVAQLVDDAMVRVEREGEKDLRIAVDGGFLSVTEEGVSILAESAEFESEIDEAAAKQDSESDDPRIAARGRARLRAVGAID.

The protein belongs to the ATPase epsilon chain family. As to quaternary structure, F-type ATPases have 2 components, CF(1) - the catalytic core - and CF(0) - the membrane proton channel. CF(1) has five subunits: alpha(3), beta(3), gamma(1), delta(1), epsilon(1). CF(0) has three main subunits: a, b and c.

The protein resides in the cell membrane. Produces ATP from ADP in the presence of a proton gradient across the membrane. The sequence is that of ATP synthase epsilon chain (atpC) from Mycobacterium bovis (strain ATCC BAA-935 / AF2122/97).